A 164-amino-acid polypeptide reads, in one-letter code: Monothiol glutaredoxin-S10 (164 aa).

Residues 60 to 161 enclose the Glutaredoxin domain; the sequence is EDSVKRTLAD…TMLSELDIDV (102 aa). Cysteine 80 provides a ligand contact to [2Fe-2S] cluster.

The protein belongs to the glutaredoxin family. CPYC subfamily.

It is found in the cytoplasm. Its function is as follows. May only reduce GSH-thiol disulfides, but not protein disulfides. In Oryza sativa subsp. japonica (Rice), this protein is Monothiol glutaredoxin-S10 (GRXS10).